The primary structure comprises 497 residues: Glycogen synthase (497 aa).

Lys15 is an ADP-alpha-D-glucose binding site.

This sequence belongs to the glycosyltransferase 1 family. Bacterial/plant glycogen synthase subfamily.

It catalyses the reaction [(1-&gt;4)-alpha-D-glucosyl](n) + ADP-alpha-D-glucose = [(1-&gt;4)-alpha-D-glucosyl](n+1) + ADP + H(+). The protein operates within glycan biosynthesis; glycogen biosynthesis. Its function is as follows. Synthesizes alpha-1,4-glucan chains using ADP-glucose. This Thermodesulfovibrio yellowstonii (strain ATCC 51303 / DSM 11347 / YP87) protein is Glycogen synthase.